A 273-amino-acid chain; its full sequence is Dormancy associated translation inhibitor (273 aa).

As to quaternary structure, interacts with human TLR2.

Its function is as follows. Involved in translation regulation. Can also stimulate macrophages and peripheral blood mononuclear cells (PBMC) to secrete important cytokines that may be significant in granuloma formation and its maintenance. Increases secretion of IFN-gamma, TNF-alpha, IL-1 beta and IL-8 through human Toll-like receptor 2 (TLR2) signaling pathway. This chain is Dormancy associated translation inhibitor, found in Mycobacterium tuberculosis (strain CDC 1551 / Oshkosh).